We begin with the raw amino-acid sequence, 274 residues long: Diaminopimelate epimerase (274 aa).

Substrate-binding residues include Asn-11, Gln-44, and Asn-64. Cys-73 serves as the catalytic Proton donor. Substrate-binding positions include 74–75 (GN), Asn-157, Asn-190, and 208–209 (ER). Cys-217 (proton acceptor) is an active-site residue. 218-219 (GS) is a substrate binding site.

It belongs to the diaminopimelate epimerase family. Homodimer.

It is found in the cytoplasm. The catalysed reaction is (2S,6S)-2,6-diaminopimelate = meso-2,6-diaminopimelate. It functions in the pathway amino-acid biosynthesis; L-lysine biosynthesis via DAP pathway; DL-2,6-diaminopimelate from LL-2,6-diaminopimelate: step 1/1. Its function is as follows. Catalyzes the stereoinversion of LL-2,6-diaminopimelate (L,L-DAP) to meso-diaminopimelate (meso-DAP), a precursor of L-lysine and an essential component of the bacterial peptidoglycan. The protein is Diaminopimelate epimerase of Edwardsiella ictaluri (strain 93-146).